A 298-amino-acid polypeptide reads, in one-letter code: UPF0696 protein C11orf68 homolog (298 aa).

A compositionally biased stretch (low complexity) spans 1 to 10; it reads MAAAAAAVAG. The interval 1-66 is disordered; that stretch reads MAAAAAAVAG…EDSPGGREDG (66 aa). The span at 11–25 shows a compositional bias: gly residues; that stretch reads AGRGGGGGGGGGGAA. Residues 41 to 50 are compositionally biased toward basic and acidic residues; it reads ERSEGRRMEP.

The protein belongs to the UPF0696 family.

This is UPF0696 protein C11orf68 homolog (Bles03) from Mus musculus (Mouse).